A 280-amino-acid polypeptide reads, in one-letter code: Diaminopimelate epimerase (280 aa).

The substrate site is built by N11 and N62. The Proton donor role is filled by C71. Residues 72 to 73, N160, N193, and 211 to 212 contribute to the substrate site; these read GN and ER. The Proton acceptor role is filled by C220. Substrate is bound at residue 221 to 222; it reads GT.

Belongs to the diaminopimelate epimerase family. Homodimer.

The protein resides in the cytoplasm. The catalysed reaction is (2S,6S)-2,6-diaminopimelate = meso-2,6-diaminopimelate. Its pathway is amino-acid biosynthesis; L-lysine biosynthesis via DAP pathway; DL-2,6-diaminopimelate from LL-2,6-diaminopimelate: step 1/1. In terms of biological role, catalyzes the stereoinversion of LL-2,6-diaminopimelate (L,L-DAP) to meso-diaminopimelate (meso-DAP), a precursor of L-lysine and an essential component of the bacterial peptidoglycan. The sequence is that of Diaminopimelate epimerase from Acetivibrio thermocellus (strain ATCC 27405 / DSM 1237 / JCM 9322 / NBRC 103400 / NCIMB 10682 / NRRL B-4536 / VPI 7372) (Clostridium thermocellum).